Here is a 295-residue protein sequence, read N- to C-terminus: Pyridoxal 5'-phosphate synthase subunit PdxS (295 aa).

Asp25 contributes to the D-ribose 5-phosphate binding site. Lys82 acts as the Schiff-base intermediate with D-ribose 5-phosphate in catalysis. Gly154 provides a ligand contact to D-ribose 5-phosphate. Residue Arg166 coordinates D-glyceraldehyde 3-phosphate. D-ribose 5-phosphate contacts are provided by residues Gly215 and 236–237 (GS).

This sequence belongs to the PdxS/SNZ family. As to quaternary structure, in the presence of PdxT, forms a dodecamer of heterodimers.

It catalyses the reaction aldehydo-D-ribose 5-phosphate + D-glyceraldehyde 3-phosphate + L-glutamine = pyridoxal 5'-phosphate + L-glutamate + phosphate + 3 H2O + H(+). Its pathway is cofactor biosynthesis; pyridoxal 5'-phosphate biosynthesis. Its function is as follows. Catalyzes the formation of pyridoxal 5'-phosphate from ribose 5-phosphate (RBP), glyceraldehyde 3-phosphate (G3P) and ammonia. The ammonia is provided by the PdxT subunit. Can also use ribulose 5-phosphate and dihydroxyacetone phosphate as substrates, resulting from enzyme-catalyzed isomerization of RBP and G3P, respectively. The chain is Pyridoxal 5'-phosphate synthase subunit PdxS from Listeria welshimeri serovar 6b (strain ATCC 35897 / DSM 20650 / CCUG 15529 / CIP 8149 / NCTC 11857 / SLCC 5334 / V8).